Reading from the N-terminus, the 928-residue chain is Outer membrane protein SlpA (928 aa).

The first 23 residues, M1–A23, serve as a signal peptide directing secretion. Residues Q24–Q84 enclose the SLH domain.

In terms of assembly, homotrimer.

The protein localises to the cell outer membrane. Plays an important role in the structural organization and integrity of the cell envelope, bridging the outer membrane to the peptidoglyan layer. Appears to be a nonselective channel. The chain is Outer membrane protein SlpA (slpA) from Thermus thermophilus (strain ATCC 27634 / DSM 579 / HB8).